A 601-amino-acid chain; its full sequence is Elongation factor 4 (601 aa).

The tr-type G domain maps to 6–188 (SHIRNFSIIA…QIVHRVPAPE (183 aa)). GTP contacts are provided by residues 18 to 23 (DHGKST) and 135 to 138 (NKID).

The protein belongs to the TRAFAC class translation factor GTPase superfamily. Classic translation factor GTPase family. LepA subfamily.

It is found in the cell inner membrane. The enzyme catalyses GTP + H2O = GDP + phosphate + H(+). Its function is as follows. Required for accurate and efficient protein synthesis under certain stress conditions. May act as a fidelity factor of the translation reaction, by catalyzing a one-codon backward translocation of tRNAs on improperly translocated ribosomes. Back-translocation proceeds from a post-translocation (POST) complex to a pre-translocation (PRE) complex, thus giving elongation factor G a second chance to translocate the tRNAs correctly. Binds to ribosomes in a GTP-dependent manner. This chain is Elongation factor 4, found in Anaeromyxobacter dehalogenans (strain 2CP-1 / ATCC BAA-258).